Reading from the N-terminus, the 76-residue chain is U-actitoxin-Avd8c (76 aa).

The signal sequence occupies residues 1-16 (LVIVFVVLLGVPLISA). Residues 17–33 (NEEELLAILQDQRNDAR) constitute a propeptide that is removed on maturation.

Belongs to the sea anemone 8 toxin family.

The protein localises to the secreted. The protein resides in the nematocyst. This Anemonia viridis (Snakelocks anemone) protein is U-actitoxin-Avd8c.